The sequence spans 361 residues: UDP-N-acetylglucosamine--N-acetylmuramyl-(pentapeptide) pyrophosphoryl-undecaprenol N-acetylglucosamine transferase (361 aa).

Residues 11–13 (TGG), Asn124, Arg164, Ser192, and Gln295 contribute to the UDP-N-acetyl-alpha-D-glucosamine site.

This sequence belongs to the glycosyltransferase 28 family. MurG subfamily.

The protein resides in the cell membrane. It carries out the reaction di-trans,octa-cis-undecaprenyl diphospho-N-acetyl-alpha-D-muramoyl-L-alanyl-D-glutamyl-meso-2,6-diaminopimeloyl-D-alanyl-D-alanine + UDP-N-acetyl-alpha-D-glucosamine = di-trans,octa-cis-undecaprenyl diphospho-[N-acetyl-alpha-D-glucosaminyl-(1-&gt;4)]-N-acetyl-alpha-D-muramoyl-L-alanyl-D-glutamyl-meso-2,6-diaminopimeloyl-D-alanyl-D-alanine + UDP + H(+). It participates in cell wall biogenesis; peptidoglycan biosynthesis. Cell wall formation. Catalyzes the transfer of a GlcNAc subunit on undecaprenyl-pyrophosphoryl-MurNAc-pentapeptide (lipid intermediate I) to form undecaprenyl-pyrophosphoryl-MurNAc-(pentapeptide)GlcNAc (lipid intermediate II). This is UDP-N-acetylglucosamine--N-acetylmuramyl-(pentapeptide) pyrophosphoryl-undecaprenol N-acetylglucosamine transferase from Deinococcus geothermalis (strain DSM 11300 / CIP 105573 / AG-3a).